The chain runs to 267 residues: Hydroxyethylthiazole kinase (267 aa).

Met-44 serves as a coordination point for substrate. Residues Arg-120 and Thr-165 each contribute to the ATP site. Gly-192 is a binding site for substrate.

The protein belongs to the Thz kinase family. Requires Mg(2+) as cofactor.

The catalysed reaction is 5-(2-hydroxyethyl)-4-methylthiazole + ATP = 4-methyl-5-(2-phosphooxyethyl)-thiazole + ADP + H(+). The protein operates within cofactor biosynthesis; thiamine diphosphate biosynthesis; 4-methyl-5-(2-phosphoethyl)-thiazole from 5-(2-hydroxyethyl)-4-methylthiazole: step 1/1. Catalyzes the phosphorylation of the hydroxyl group of 4-methyl-5-beta-hydroxyethylthiazole (THZ). The sequence is that of Hydroxyethylthiazole kinase from Carboxydothermus hydrogenoformans (strain ATCC BAA-161 / DSM 6008 / Z-2901).